Consider the following 319-residue polypeptide: Probable arabinan endo-1,5-alpha-L-arabinosidase A (319 aa).

The N-terminal stretch at methionine 1–glycine 19 is a signal peptide. Aspartate 34 acts as the Proton acceptor in catalysis. Asparagine 53 is a glycosylation site (N-linked (GlcNAc...) asparagine). Glutamate 198 (proton donor) is an active-site residue.

It belongs to the glycosyl hydrolase 43 family.

The protein resides in the secreted. The catalysed reaction is Endohydrolysis of (1-&gt;5)-alpha-arabinofuranosidic linkages in (1-&gt;5)-arabinans.. The protein operates within glycan metabolism; L-arabinan degradation. Functionally, endo-1,5-alpha-L-arabinanase involved in degradation of pectin. Its preferred substrate is linear 1,5-alpha-L-arabinan. This Aspergillus flavus (strain ATCC 200026 / FGSC A1120 / IAM 13836 / NRRL 3357 / JCM 12722 / SRRC 167) protein is Probable arabinan endo-1,5-alpha-L-arabinosidase A (abnA).